We begin with the raw amino-acid sequence, 446 residues long: Phosphoglucosamine mutase (446 aa).

The active-site Phosphoserine intermediate is S100. The Mg(2+) site is built by S100, D241, D243, and D245. At S100 the chain carries Phosphoserine.

It belongs to the phosphohexose mutase family. It depends on Mg(2+) as a cofactor. Post-translationally, activated by phosphorylation.

The enzyme catalyses alpha-D-glucosamine 1-phosphate = D-glucosamine 6-phosphate. Its function is as follows. Catalyzes the conversion of glucosamine-6-phosphate to glucosamine-1-phosphate. The sequence is that of Phosphoglucosamine mutase from Methylorubrum extorquens (strain CM4 / NCIMB 13688) (Methylobacterium extorquens).